Here is a 119-residue protein sequence, read N- to C-terminus: Large ribosomal subunit protein bL20 (119 aa).

Belongs to the bacterial ribosomal protein bL20 family.

Its function is as follows. Binds directly to 23S ribosomal RNA and is necessary for the in vitro assembly process of the 50S ribosomal subunit. It is not involved in the protein synthesizing functions of that subunit. The sequence is that of Large ribosomal subunit protein bL20 from Chloroflexus aurantiacus (strain ATCC 29366 / DSM 635 / J-10-fl).